Here is a 371-residue protein sequence, read N- to C-terminus: ATP-dependent protease ATP-binding subunit-like protein AmiB (371 aa).

96-103 serves as a coordination point for ATP; sequence GPTGVGKT.

It belongs to the ClpX chaperone family. The cofactor is Mg(2+).

Its function is as follows. Unlikely to encode a regulatory protein. Has ATPase activity. AmiB and AmiS may act jointly into a two component ABC transporter system. The sequence is that of ATP-dependent protease ATP-binding subunit-like protein AmiB (amiB) from Pseudomonas aeruginosa (strain ATCC 15692 / DSM 22644 / CIP 104116 / JCM 14847 / LMG 12228 / 1C / PRS 101 / PAO1).